The following is a 355-amino-acid chain: Probable NADPH-dependent quinone reductase tdiC (355 aa).

Belongs to the zinc-containing alcohol dehydrogenase family. It depends on NADPH as a cofactor.

Its pathway is secondary metabolite biosynthesis. Its function is as follows. Probable NADPH-dependent quinone reductase; part of the gene cluster that mediates the biosynthesis of terrequinone A, an antitumor agent. The first step in the biosynthetic pathway for terrequinone A is formation of indole pyruvic acid (IPA) from L-tryptophan by the aminotransferase tdiD. The nonribosomal peptide synthase tdiA then immediately converts unstable IPA to didemethylasterriquinone D (DDAQ D), via condensation of 2 IPA molecules. The symmetric connectivity of the 2 IPA molecules is thought to arise by head-to-tail dual Claisen condensations facilitated by the TE domain. TdiB then catalyzes reverse prenylation by transferring dimethylallyl diphosphate to carbon atom 2' of DDAQ D, to yield asterriquinone C-1. Finally, tdiC and tdiE enzymes robustly convert asterriquinone C-1 to terrequinone A via a transformation involving regular prenylation at carbon atom 5, which requires elimination of the hydroxy group on C-5. This Emericella nidulans (strain FGSC A4 / ATCC 38163 / CBS 112.46 / NRRL 194 / M139) (Aspergillus nidulans) protein is Probable NADPH-dependent quinone reductase tdiC.